A 144-amino-acid chain; its full sequence is UPF0102 protein BMA2801 (144 aa).

The segment at 1 to 28 (MCHAREASPGTGEPEAAPRDNFPRAAGS) is disordered.

This sequence belongs to the UPF0102 family.

The chain is UPF0102 protein BMA2801 from Burkholderia mallei (strain ATCC 23344).